The sequence spans 640 residues: Threonine--tRNA ligase (640 aa).

Residues 1 to 59 (MKIKVKLPDGKEKEYDRGITPAEIAKELGIKKAIGAVVNGELWDLKRPIENDCELRLVT) enclose the TGS domain. Residues 240-531 (DHRKLGPQLE…LIEHFAGAFP (292 aa)) form a catalytic region. Zn(2+) is bound by residues Cys332, His383, and His508.

Belongs to the class-II aminoacyl-tRNA synthetase family. As to quaternary structure, homodimer. Requires Zn(2+) as cofactor.

It is found in the cytoplasm. The enzyme catalyses tRNA(Thr) + L-threonine + ATP = L-threonyl-tRNA(Thr) + AMP + diphosphate + H(+). Functionally, catalyzes the attachment of threonine to tRNA(Thr) in a two-step reaction: L-threonine is first activated by ATP to form Thr-AMP and then transferred to the acceptor end of tRNA(Thr). Also edits incorrectly charged L-seryl-tRNA(Thr). This Thermotoga maritima (strain ATCC 43589 / DSM 3109 / JCM 10099 / NBRC 100826 / MSB8) protein is Threonine--tRNA ligase.